The sequence spans 381 residues: Deoxyguanosinetriphosphate triphosphohydrolase-like protein (381 aa).

An HD domain is found at 76–203; that stretch reads RMTHTLEVAG…ADLSDEIAYT (128 aa).

The protein belongs to the dGTPase family. Type 2 subfamily.

This chain is Deoxyguanosinetriphosphate triphosphohydrolase-like protein, found in Leptospira interrogans serogroup Icterohaemorrhagiae serovar copenhageni (strain Fiocruz L1-130).